A 295-amino-acid chain; its full sequence is Probable endonuclease 4 (295 aa).

Positions 78, 118, 154, 188, 191, 225, 238, 240, and 270 each coordinate Zn(2+).

This sequence belongs to the AP endonuclease 2 family. Zn(2+) is required as a cofactor.

It catalyses the reaction Endonucleolytic cleavage to 5'-phosphooligonucleotide end-products.. Endonuclease IV plays a role in DNA repair. It cleaves phosphodiester bonds at apurinic or apyrimidinic (AP) sites, generating a 3'-hydroxyl group and a 5'-terminal sugar phosphate. In Vibrio parahaemolyticus serotype O3:K6 (strain RIMD 2210633), this protein is Probable endonuclease 4.